A 257-amino-acid chain; its full sequence is Protein YIPF5 (257 aa).

Over 1–124 the chain is Cytoplasmic; it reads MSGFENLNTD…KVADGSIMNE (124 aa). The tract at residues 75 to 106 is interaction with Sec23; it reads PASPQPFYGNNFEDEPPLLEELGINFDHIWQK. A helical membrane pass occupies residues 125 to 145; it reads TDLAGPMVFCLAFGATLLLAG. Lysine 146 is a topological domain (lumenal). The helical transmembrane segment at 147–167 threads the bilayer; sequence IQFGYVYGISAIGCLGMFCLL. Residues 168–173 are Cytoplasmic-facing; sequence NLMSMT. The helical transmembrane segment at 174–194 threads the bilayer; the sequence is GVSFGCVASVLGYCLLPMILL. At 195-196 the chain is on the lumenal side; sequence SS. Residues 197 to 217 form a helical membrane-spanning segment; sequence FAVIFSLQGMVGIILTAGIIG. At 218-236 the chain is on the cytoplasmic side; the sequence is WCSFSASKIFISALAMEGQ. Residues 237–257 form a helical membrane-spanning segment; that stretch reads QLLVAYPCALLYGVFALISVF.

This sequence belongs to the YIP1 family. Interacts with the COPII coat components Sec23 (SEC23A and/or SEC23B) and Sec24 (SEC24A and/or SEC24B). Interacts with YIF1A. May interact with RAB1A. Interacts with YIPF3 and YIPF4. Ubiquitously expressed with abundant expression in pancreatic tissue, islets, beta cells, and brain. Highly expressed in coronary smooth muscles.

It is found in the endoplasmic reticulum membrane. The protein localises to the golgi apparatus. The protein resides in the cis-Golgi network membrane. Its subcellular location is the cytoplasmic vesicle. It localises to the COPII-coated vesicle. Its function is as follows. Plays a role in transport between endoplasmic reticulum and Golgi. In pancreatic beta cells, required to transport proinsulin from endoplasmic reticulum into the Golgi. In Homo sapiens (Human), this protein is Protein YIPF5.